The sequence spans 672 residues: Beta-galactosidase BgaB (672 aa).

Arg109 contacts substrate. Zn(2+) is bound at residue Cys113. Asn147 contributes to the substrate binding site. The active-site Proton donor is Glu148. Residues Cys156, Cys158, and Cys161 each coordinate Zn(2+). Catalysis depends on Glu303, which acts as the Nucleophile. Substrate contacts are provided by residues Trp311 and 351–354 (EKFH).

Belongs to the glycosyl hydrolase 42 family.

It catalyses the reaction Hydrolysis of terminal non-reducing beta-D-galactose residues in beta-D-galactosides.. The chain is Beta-galactosidase BgaB from Geobacillus sp. (strain Y412MC61).